A 1171-amino-acid polypeptide reads, in one-letter code: ATP-dependent helicase/deoxyribonuclease subunit B (1171 aa).

Residues 1 to 390 (MSLRFVIGRA…HPLVECIRSA (390 aa)) enclose the UvrD-like helicase ATP-binding domain. 8–15 (GRAGSGKS) contributes to the ATP binding site. The region spanning 281 to 587 (MEQPRFHSPA…QFANIPPSLD (307 aa)) is the UvrD-like helicase C-terminal domain. Residues cysteine 805, cysteine 1129, cysteine 1132, and cysteine 1138 each contribute to the [4Fe-4S] cluster site.

It belongs to the helicase family. AddB/RexB type 1 subfamily. Heterodimer of AddA and AddB. Mg(2+) serves as cofactor. The cofactor is [4Fe-4S] cluster.

In terms of biological role, the heterodimer acts as both an ATP-dependent DNA helicase and an ATP-dependent, dual-direction single-stranded exonuclease. Recognizes the chi site generating a DNA molecule suitable for the initiation of homologous recombination. The AddB subunit has 5' -&gt; 3' nuclease activity but not helicase activity. This chain is ATP-dependent helicase/deoxyribonuclease subunit B, found in Bacillus cereus (strain ATCC 10987 / NRS 248).